The chain runs to 450 residues: Probable ECA polymerase (450 aa).

The next 11 membrane-spanning stretches (helical) occupy residues 6–26, 37–57, 63–83, 118–138, 155–175, 181–201, 207–227, 228–248, 341–361, 378–398, and 410–430; these read FSGL…LTWF, VFFS…TSVL, VGVA…CFYA, VILM…NGFL, GVAL…VYFL, AWLF…MIVG, IIIA…ISLW, MLAA…LKRY, LVVM…GLII, YKAA…IVLA, and VFFI…YWLF.

It belongs to the WzyE family. In terms of assembly, probably part of a complex composed of WzxE, WzyE and WzzE.

It is found in the cell inner membrane. Its pathway is bacterial outer membrane biogenesis; enterobacterial common antigen biosynthesis. Functionally, probably involved in the polymerization of enterobacterial common antigen (ECA) trisaccharide repeat units. This is Probable ECA polymerase from Escherichia coli O17:K52:H18 (strain UMN026 / ExPEC).